We begin with the raw amino-acid sequence, 335 residues long: DDRGK domain-containing protein 1 (335 aa).

The Lumenal segment spans residues 1–6 (MGDTYS). A helical membrane pass occupies residues 7 to 27 (LVLVAGYLSIFLFIGAIGYFY). Residues 28-335 (LSKPRIPSSN…NNDQDPVDTN (308 aa)) lie on the Cytoplasmic side of the membrane. The segment at 37 to 124 (NVNEQQQQQQ…GEDIGVVAPG (88 aa)) is disordered. Low complexity-rich tracts occupy residues 41-56 (QQQQQQQQQQQQQQPQ) and 91-103 (SSGSDSDNSTNSD). Acidic residues predominate over residues 104–117 (NYDDDNGQEGEGED).

This sequence belongs to the DDRGK1 family.

It localises to the endoplasmic reticulum membrane. Functionally, substrate adapter for ufmylation, the covalent attachment of the ubiquitin-like modifier UFM1 to substrate proteins. The sequence is that of DDRGK domain-containing protein 1 from Dictyostelium discoideum (Social amoeba).